The following is a 232-amino-acid chain: Thiamine import ATP-binding protein ThiQ (232 aa).

The 229-residue stretch at Leu-2–Ile-230 folds into the ABC transporter domain. Gly-32–Ser-39 lines the ATP pocket.

This sequence belongs to the ABC transporter superfamily. Thiamine importer (TC 3.A.1.19.1) family. In terms of assembly, the complex is composed of two ATP-binding proteins (ThiQ), two transmembrane proteins (ThiP) and a solute-binding protein (ThiB).

Its subcellular location is the cell inner membrane. It carries out the reaction thiamine(out) + ATP + H2O = thiamine(in) + ADP + phosphate + H(+). Part of the ABC transporter complex ThiBPQ involved in thiamine import. Responsible for energy coupling to the transport system. This Escherichia coli O6:H1 (strain CFT073 / ATCC 700928 / UPEC) protein is Thiamine import ATP-binding protein ThiQ.